We begin with the raw amino-acid sequence, 193 residues long: Corrinoid adenosyltransferase (193 aa).

ATP is bound by residues 10–18 (TRTGDDGTT), lysine 28, 137–142 (RRAERS), and asparagine 163.

It belongs to the Cob(I)alamin adenosyltransferase family.

Its subcellular location is the cytoplasm. The enzyme catalyses 2 cob(II)yrinate a,c diamide + reduced [electron-transfer flavoprotein] + 2 ATP = 2 adenosylcob(III)yrinate a,c-diamide + 2 triphosphate + oxidized [electron-transfer flavoprotein] + 3 H(+). It carries out the reaction 2 cob(II)alamin + reduced [electron-transfer flavoprotein] + 2 ATP = 2 adenosylcob(III)alamin + 2 triphosphate + oxidized [electron-transfer flavoprotein] + 3 H(+). It participates in cofactor biosynthesis; adenosylcobalamin biosynthesis; adenosylcobalamin from cob(II)yrinate a,c-diamide: step 2/7. The polypeptide is Corrinoid adenosyltransferase (Mycobacterium bovis (strain ATCC BAA-935 / AF2122/97)).